Consider the following 193-residue polypeptide: Peptidyl-tRNA hydrolase (193 aa).

Residue Tyr-15 coordinates tRNA. His-20 (proton acceptor) is an active-site residue. Phe-65, Asn-67, and Asn-113 together coordinate tRNA.

This sequence belongs to the PTH family. As to quaternary structure, monomer.

The protein localises to the cytoplasm. It carries out the reaction an N-acyl-L-alpha-aminoacyl-tRNA + H2O = an N-acyl-L-amino acid + a tRNA + H(+). In terms of biological role, hydrolyzes ribosome-free peptidyl-tRNAs (with 1 or more amino acids incorporated), which drop off the ribosome during protein synthesis, or as a result of ribosome stalling. Functionally, catalyzes the release of premature peptidyl moieties from peptidyl-tRNA molecules trapped in stalled 50S ribosomal subunits, and thus maintains levels of free tRNAs and 50S ribosomes. The chain is Peptidyl-tRNA hydrolase from Ehrlichia canis (strain Jake).